The chain runs to 125 residues: Glycine cleavage system H protein (125 aa).

The Lipoyl-binding domain occupies 22-103 (VFVVGITENA…AFTAWIFKIK (82 aa)). N6-lipoyllysine is present on lysine 63.

The protein belongs to the GcvH family. As to quaternary structure, the glycine cleavage system is composed of four proteins: P, T, L and H. (R)-lipoate is required as a cofactor.

The glycine cleavage system catalyzes the degradation of glycine. The H protein shuttles the methylamine group of glycine from the P protein to the T protein. The polypeptide is Glycine cleavage system H protein (Bordetella avium (strain 197N)).